A 402-amino-acid polypeptide reads, in one-letter code: Sex hormone-binding globulin (402 aa).

The signal sequence occupies residues 1–29; it reads MESRGPLATSRLLLLLLLLLLRHTRQGWA. A glycan (O-linked (GalNAc...) threonine) is linked at T36. Laminin G-like domains lie at 45–217 and 224–390; these read VHLS…LRSC and GIFL…THSC. 2 cysteine pairs are disulfide-bonded: C193-C217 and C362-C390. 2 N-linked (GlcNAc...) asparagine glycosylation sites follow: N380 and N396.

In terms of assembly, homodimer. In terms of processing, variant Asn-356 contains one N-linked (GlcNAc...) at position 356. Isoform 1 and isoform 2 are present in liver and testis.

It localises to the secreted. Functionally, functions as an androgen transport protein, but may also be involved in receptor mediated processes. Each dimer binds one molecule of steroid. Specific for 5-alpha-dihydrotestosterone, testosterone, and 17-beta-estradiol. Regulates the plasma metabolic clearance rate of steroid hormones by controlling their plasma concentration. The polypeptide is Sex hormone-binding globulin (Homo sapiens (Human)).